Here is a 249-residue protein sequence, read N- to C-terminus: Adenosylcobinamide-GDP ribazoletransferase (249 aa).

The next 7 helical transmembrane spans lie at 29 to 49, 50 to 70, 104 to 124, 131 to 151, 165 to 185, 194 to 214, and 226 to 246; these read LYWFPVVGAFLGTLLAACAWL, PLSIGWSELASAVVVVGGFIV, VGSFGALALLSLMLLKWVAIL, AFALIASGVLLGRLSQVLLAA, GFVGGAGRTHAAVALALSLMM, PFLLFLLFGAALTAAALIGFL, and VLGAVSEVTELFVWLAAGVAF.

Belongs to the CobS family. Requires Mg(2+) as cofactor.

It is found in the cell inner membrane. The enzyme catalyses alpha-ribazole + adenosylcob(III)inamide-GDP = adenosylcob(III)alamin + GMP + H(+). It catalyses the reaction alpha-ribazole 5'-phosphate + adenosylcob(III)inamide-GDP = adenosylcob(III)alamin 5'-phosphate + GMP + H(+). It functions in the pathway cofactor biosynthesis; adenosylcobalamin biosynthesis; adenosylcobalamin from cob(II)yrinate a,c-diamide: step 7/7. Its function is as follows. Joins adenosylcobinamide-GDP and alpha-ribazole to generate adenosylcobalamin (Ado-cobalamin). Also synthesizes adenosylcobalamin 5'-phosphate from adenosylcobinamide-GDP and alpha-ribazole 5'-phosphate. The protein is Adenosylcobinamide-GDP ribazoletransferase of Chlorobium phaeovibrioides (strain DSM 265 / 1930) (Prosthecochloris vibrioformis (strain DSM 265)).